The chain runs to 589 residues: Kelch-like protein diablo (589 aa).

A disordered region spans residues 1–22; the sequence is MGDVLISDRPPSPARLSHTSEK. A BTB domain is found at 41-108; the sequence is CDVVINVSGR…CYTSHIVVEE (68 aa). The BACK domain maps to 143-245; sequence CLGIRAFADT…SPKFLVGTVG (103 aa). Kelch repeat units lie at residues 292 to 338, 340 to 386, 387 to 433, 435 to 480, 482 to 527, and 528 to 574; these read VLFA…VLND, LYAV…VLDG, FLYA…VLGG, LYAI…VFNN, IYAV…VVNG, and QLYA…VMRA.

It participates in protein modification; protein ubiquitination. Its function is as follows. Probable substrate-specific adapter of an E3 ubiquitin-protein ligase complex which mediates the ubiquitination and subsequent proteasomal degradation of target proteins. May have a role in synapse differentiation and growth. This is Kelch-like protein diablo from Aedes aegypti (Yellowfever mosquito).